We begin with the raw amino-acid sequence, 110 residues long: UPF0367 protein Syncc9605_2376 (110 aa).

Belongs to the UPF0367 family.

The polypeptide is UPF0367 protein Syncc9605_2376 (Synechococcus sp. (strain CC9605)).